The following is a 530-amino-acid chain: UDP-glucuronosyltransferase 1A9 (530 aa).

The first 25 residues, 1–25, serve as a signal peptide directing secretion; sequence MACTGWTSPLPLCVCLLLTCGFAEA. Asn71 is a glycosylation site (N-linked (GlcNAc...) asparagine). Lys99 is subject to N6-succinyllysine. Residues Asn292 and Asn344 are each glycosylated (N-linked (GlcNAc...) asparagine). Residues 488–504 form a helical membrane-spanning segment; that stretch reads VIGFLLAVVLTVAFITF.

The protein belongs to the UDP-glycosyltransferase family. As to quaternary structure, homodimer. Homooligomer. Interacts with UGT1A1, UGT1A3, UGT1A4, UGT1A6, UGT1A7, UGT1A8 and UGT1A10 to form heterodimers. Isoform 1 interacts with isoform 2/i2 suggesting that oligomerization is involved in negative regulation of transferase activity by isoform 2. Isoform 1 also interacts with respective i2 isoforms of UGT1A1, UGT1A3, UGT1A4, UGT1A6, UGT1A7, UGT1A8 and UGT1A10. As to expression, expressed in liver, kidney, colon, esophagus and small intestine.

Its subcellular location is the endoplasmic reticulum membrane. It carries out the reaction glucuronate acceptor + UDP-alpha-D-glucuronate = acceptor beta-D-glucuronoside + UDP + H(+). The enzyme catalyses 2-hydroxy-17beta-estradiol + UDP-alpha-D-glucuronate = 2-hydroxy-17beta-estradiol 3-O-(beta-D-glucuronate) + UDP + H(+). The catalysed reaction is 4-hydroxy-17beta-estradiol + UDP-alpha-D-glucuronate = 17beta-estradiol 4-O-(beta-D-glucuronate) + UDP + H(+). It catalyses the reaction 2-hydroxyestrone + UDP-alpha-D-glucuronate = 2-hydroxyestrone 3-O-(beta-D-glucuronate) + UDP + H(+). It carries out the reaction 4-hydroxyestrone + UDP-alpha-D-glucuronate = estrone 4-O-(beta-D-glucuronate) + UDP + H(+). The enzyme catalyses prunetin + UDP-alpha-D-glucuronate = prunetin-5-O-beta-D-glucuronide + UDP. The catalysed reaction is 8-iso-prostaglandin F2alpha + UDP-alpha-D-glucuronate = 8-iso-prostaglandin F2alpha-glucuronide + UDP + H(+). It catalyses the reaction 5-epi-5-F2t-IsoP + UDP-alpha-D-glucuronate = 5-epi-5-F2t-IsoP-glucuronide + UDP + H(+). It carries out the reaction (5Z,8Z,11Z,14Z)-eicosatetraenoate + UDP-alpha-D-glucuronate = O-[(5Z),(8Z),(11Z),(14Z)-eicosatetraenoyl]-beta-D-glucuronate + UDP. The enzyme catalyses 15-hydroxy-(5Z,8Z,11Z,13E)-eicosatetraenoate + UDP-alpha-D-glucuronate = 15-O-(beta-D-glucuronosyl)-(5Z,8Z,11Z,14Z)-eicosatetraenoate + UDP + H(+). The catalysed reaction is prostaglandin B1 + UDP-alpha-D-glucuronate = 15-O-(beta-D-glucuronosyl)-prostaglandin B1 + UDP + H(+). It catalyses the reaction (E)-ferulate + UDP-alpha-D-glucuronate = (E)-4-O-(beta-D-glucuronosyl)-ferulate + UDP + H(+). It carries out the reaction (E)-ferulate + UDP-alpha-D-glucuronate = (E)-ferulic acid beta-D-glucuronate ester + UDP. The enzyme catalyses candesartan + UDP-alpha-D-glucuronate = candesartan O-beta-D-glucuronoside + UDP. The catalysed reaction is SN-38 + UDP-alpha-D-glucuronate = SN-38 O-beta-D-glucuronide + UDP + H(+). It catalyses the reaction mycophenolate + UDP-alpha-D-glucuronate = mycophenolate 7-O-beta-D-glucuronide + UDP + H(+). In terms of biological role, UDP-glucuronosyltransferase (UGT) that catalyzes phase II biotransformation reactions in which lipophilic substrates are conjugated with glucuronic acid to increase the metabolite's water solubility, thereby facilitating excretion into either the urine or bile. Essential for the elimination and detoxification of drugs, xenobiotics and endogenous compounds. Catalyzes the glucuronidation of endogenous estrogen hormones such as estradiol and estrone. Involved in the glucuronidation of arachidonic acid (AA) and AA-derived eicosanoids including 15-HETE, PGB1 and F2-isoprostanes (8-iso-PGF2alpha and 5-epi-5-F2t-IsoP). Glucuronates the phytochemical ferulic acid efficently at both the phenolic or the carboxylic acid group. Also catalyzes the glucuronidation of the isoflavones genistein, daidzein, glycitein, formononetin, biochanin A and prunetin, which are phytoestrogens with anticancer and cardiovascular properties. Involved in the glucuronidation of the AGTR1 angiotensin receptor antagonist caderastan, a drug which can inhibit the effect of angiotensin II. Involved in the biotransformation of 7-ethyl-10-hydroxycamptothecin (SN-38), the pharmacologically active metabolite of the anticancer drug irinotecan. Also metabolizes mycophenolate, an immunosuppressive agent. Its function is as follows. Lacks UGT glucuronidation activity but acts as a negative regulator of isoform 1. The polypeptide is UDP-glucuronosyltransferase 1A9 (Homo sapiens (Human)).